The chain runs to 613 residues: MPAYRSRTSTHGRNMAGARGLWRATGMKNEDFGKPIIAVVNSFTQFVPGHVHLKDLGQLVAREIEKAGGVAKEFNTIAVDDGIAMGHDGMLYSLPSREIIADSVEYMVNAHCADAMVCISNCDKITPGMLMAALRLNVPAVFVSGGPMESGKVNVNGKIRSVDLIDAMVAAADDSVSDADVEAIERSACPTCGSCSGMFTANSMNCLTEALGLALPGNGSVLATHADRKGLFVEAGHLIVDLARRYYEQDDARVLPRAIASFKAFENAMTLDISMGGSTNTVLHLLAAAYEGEVPFTMKDIDRLSRRVPVLCKVAPSVVDVHLEDVHRAGGIMGILGELDRAGLIDSSLPTVHSTSLKDGLERWDIKRTKSDSVRSFYLAAPGGVRTQVAFSQDKRFEELDADRSSGCIRDAEHAFSKDGGLAVLYGNIARDGCIVKTAGVDDSILTFSGPARIFESQDAAVDAILTNRIQPGDVVLIRYEGPRGGPGMQEMLYPTSYLKSKGLGKQCALITDGRFSGGSSGLSIGHVSPEAAEGGAIGLVEEGDRIVFDIPNRKVHLDVSDAELERRRAAMEAKGDKAWKPAPRKRRVTMALKAYAAHATSAALGAVRVVKD.

D81 provides a ligand contact to Mg(2+). Position 122 (C122) interacts with [2Fe-2S] cluster. D123 and K124 together coordinate Mg(2+). N6-carboxylysine is present on K124. C195 contributes to the [2Fe-2S] cluster binding site. Residue E491 coordinates Mg(2+). The active-site Proton acceptor is S517.

The protein belongs to the IlvD/Edd family. In terms of assembly, homodimer. [2Fe-2S] cluster is required as a cofactor. It depends on Mg(2+) as a cofactor.

The catalysed reaction is (2R)-2,3-dihydroxy-3-methylbutanoate = 3-methyl-2-oxobutanoate + H2O. The enzyme catalyses (2R,3R)-2,3-dihydroxy-3-methylpentanoate = (S)-3-methyl-2-oxopentanoate + H2O. It functions in the pathway amino-acid biosynthesis; L-isoleucine biosynthesis; L-isoleucine from 2-oxobutanoate: step 3/4. It participates in amino-acid biosynthesis; L-valine biosynthesis; L-valine from pyruvate: step 3/4. Functions in the biosynthesis of branched-chain amino acids. Catalyzes the dehydration of (2R,3R)-2,3-dihydroxy-3-methylpentanoate (2,3-dihydroxy-3-methylvalerate) into 2-oxo-3-methylpentanoate (2-oxo-3-methylvalerate) and of (2R)-2,3-dihydroxy-3-methylbutanoate (2,3-dihydroxyisovalerate) into 2-oxo-3-methylbutanoate (2-oxoisovalerate), the penultimate precursor to L-isoleucine and L-valine, respectively. The sequence is that of Dihydroxy-acid dehydratase from Nitrobacter hamburgensis (strain DSM 10229 / NCIMB 13809 / X14).